The sequence spans 140 residues: 3-hydroxyacyl-[acyl-carrier-protein] dehydratase FabZ (140 aa).

His47 is an active-site residue.

The protein belongs to the thioester dehydratase family. FabZ subfamily.

The protein resides in the cytoplasm. It carries out the reaction a (3R)-hydroxyacyl-[ACP] = a (2E)-enoyl-[ACP] + H2O. Functionally, involved in unsaturated fatty acids biosynthesis. Catalyzes the dehydration of short chain beta-hydroxyacyl-ACPs and long chain saturated and unsaturated beta-hydroxyacyl-ACPs. This chain is 3-hydroxyacyl-[acyl-carrier-protein] dehydratase FabZ, found in Streptococcus agalactiae serotype III (strain NEM316).